The primary structure comprises 153 residues: Cytochrome c-type biogenesis protein CcmE (153 aa).

Residues 1–7 (MTRKKRR) are Cytoplasmic-facing. Residues 8 to 28 (LYFVVLGMLALFAAAGLTLTA) traverse the membrane as a helical; Signal-anchor for type II membrane protein segment. Residues 29–153 (FQDNLVFFYS…PPTAAAAPAP (125 aa)) lie on the Periplasmic side of the membrane. The heme site is built by His121 and Tyr125. A disordered region spans residues 132–153 (ESLKASGKWQHGPPTAAAAPAP). The segment covering 144–153 (PPTAAAAPAP) has biased composition (low complexity).

It belongs to the CcmE/CycJ family.

The protein localises to the cell inner membrane. Heme chaperone required for the biogenesis of c-type cytochromes. Transiently binds heme delivered by CcmC and transfers the heme to apo-cytochromes in a process facilitated by CcmF and CcmH. This is Cytochrome c-type biogenesis protein CcmE from Rhodospirillum rubrum (strain ATCC 11170 / ATH 1.1.1 / DSM 467 / LMG 4362 / NCIMB 8255 / S1).